The following is a 448-amino-acid chain: 3-phosphoshikimate 1-carboxyvinyltransferase (448 aa).

3-phosphoshikimate is bound by residues lysine 38, serine 39, and arginine 43. Lysine 38 contributes to the phosphoenolpyruvate binding site. Positions 111 and 140 each coordinate phosphoenolpyruvate. Residues serine 185, glutamine 187, aspartate 335, and lysine 362 each coordinate 3-phosphoshikimate. Glutamine 187 serves as a coordination point for phosphoenolpyruvate. The active-site Proton acceptor is aspartate 335. Phosphoenolpyruvate-binding residues include arginine 366 and arginine 408.

It belongs to the EPSP synthase family. As to quaternary structure, monomer.

Its subcellular location is the cytoplasm. It catalyses the reaction 3-phosphoshikimate + phosphoenolpyruvate = 5-O-(1-carboxyvinyl)-3-phosphoshikimate + phosphate. The protein operates within metabolic intermediate biosynthesis; chorismate biosynthesis; chorismate from D-erythrose 4-phosphate and phosphoenolpyruvate: step 6/7. Catalyzes the transfer of the enolpyruvyl moiety of phosphoenolpyruvate (PEP) to the 5-hydroxyl of shikimate-3-phosphate (S3P) to produce enolpyruvyl shikimate-3-phosphate and inorganic phosphate. The polypeptide is 3-phosphoshikimate 1-carboxyvinyltransferase (Synechococcus elongatus (strain ATCC 33912 / PCC 7942 / FACHB-805) (Anacystis nidulans R2)).